We begin with the raw amino-acid sequence, 198 residues long: MKITNPKLIISAVSKKQYPAGNLSEIAFVGRSNVGKSSLINTLIERNGLAHTSGQPGKTQTLNFYNLDEKLFFVDVPGYGYAKVSKAQREQFGSMVEEYLSSRDQLKGVISLIDARHEPTEDDKLMYNWLEYYQVPILIVATKADKVASGKFNAVESQIKKTLKFNSTTSSLILFSAIKKFGAKEIWNWIKGQAELQE.

One can recognise an EngB-type G domain in the interval 22–196 (NLSEIAFVGR…WNWIKGQAEL (175 aa)). GTP contacts are provided by residues 30 to 37 (GRSNVGKS), 57 to 61 (GKTQT), 75 to 78 (DVPG), 142 to 145 (TKAD), and 175 to 177 (FSA). Mg(2+) contacts are provided by Ser-37 and Thr-59.

Belongs to the TRAFAC class TrmE-Era-EngA-EngB-Septin-like GTPase superfamily. EngB GTPase family. Mg(2+) serves as cofactor.

Functionally, necessary for normal cell division and for the maintenance of normal septation. This chain is Probable GTP-binding protein EngB, found in Oenococcus oeni (strain ATCC BAA-331 / PSU-1).